Consider the following 394-residue polypeptide: MNLHEYQAKQLFEHYGLPVKNGAVCQSVDEVDLVLAQLSGDKWAAKCQVHAGGRGKAGGVKLVQDVEEARSFAEKWLGQRLVTFQTDKLGQPVNQIYFEETCDIDKEFYLSAVVDRASQKVVFIASPAGGMDIEEVAQNTPHLLHKVEIDPLFGGLPYQGRELAFKLGLSDAQNKQFTDIFMGLSRLFLEKDLSLVEVNPLVLTQQGNLVCLDAKIAVDDNALFRHKDLSALQDLTQNDAREAEAEKFQLNYVALEGDIGCMVNGAGLAMGTMDIVKLYGGKPANFLDVGGGATKERVAEAFKIILTDPSVKVILVNIFGGIVRCDLIAEGVIAAVNEVGVRVPVVVRLEGTNAEIGRQILAESDVNILTAQSLQQATELAVNAAKENSNGDFN.

Residues lysine 46, 53-55, glutamate 99, cysteine 102, and glutamate 107 contribute to the ATP site; that span reads GRG. Mg(2+) contacts are provided by asparagine 199 and aspartate 213. Substrate-binding positions include asparagine 264 and 321-323; that span reads GIV.

Belongs to the succinate/malate CoA ligase beta subunit family. In terms of assembly, heterotetramer of two alpha and two beta subunits. Requires Mg(2+) as cofactor.

The catalysed reaction is succinate + ATP + CoA = succinyl-CoA + ADP + phosphate. It catalyses the reaction GTP + succinate + CoA = succinyl-CoA + GDP + phosphate. The protein operates within carbohydrate metabolism; tricarboxylic acid cycle; succinate from succinyl-CoA (ligase route): step 1/1. Succinyl-CoA synthetase functions in the citric acid cycle (TCA), coupling the hydrolysis of succinyl-CoA to the synthesis of either ATP or GTP and thus represents the only step of substrate-level phosphorylation in the TCA. The beta subunit provides nucleotide specificity of the enzyme and binds the substrate succinate, while the binding sites for coenzyme A and phosphate are found in the alpha subunit. This Haemophilus influenzae (strain PittGG) protein is Succinate--CoA ligase [ADP-forming] subunit beta.